The sequence spans 387 residues: Limonene 1,2-monooxygenase (387 aa).

This sequence belongs to the bacterial luciferase oxidoreductase family. Requires FAD as cofactor.

The enzyme catalyses (4S)-limonene + NADPH + O2 + H(+) = limonene 1,2-epoxide + NADP(+) + H2O. It catalyses the reaction (4S)-limonene + NADH + O2 + H(+) = limonene 1,2-epoxide + NAD(+) + H2O. The catalysed reaction is (4R)-limonene + NADH + O2 + H(+) = limonene 1,2-epoxide + NAD(+) + H2O. It carries out the reaction (4R)-limonene + NADPH + O2 + H(+) = limonene 1,2-epoxide + NADP(+) + H2O. Its pathway is terpene metabolism; (4R)-limonene degradation; (1S,4R)-1-hydroxylimonen-2-one from (4R)-limonene: step 1/3. Its function is as follows. Acts on both enantiomers of limonene by their NAD-dependent epoxidation at the 1,2 double bond forming limonene-1,2-epoxide. This Rhodococcus erythropolis (Arthrobacter picolinophilus) protein is Limonene 1,2-monooxygenase (limB).